We begin with the raw amino-acid sequence, 367 residues long: DNA replication and repair protein RecF (367 aa).

31–38 (GENGSGKT) is an ATP binding site.

It belongs to the RecF family.

The protein resides in the cytoplasm. In terms of biological role, the RecF protein is involved in DNA metabolism; it is required for DNA replication and normal SOS inducibility. RecF binds preferentially to single-stranded, linear DNA. It also seems to bind ATP. In Saccharophagus degradans (strain 2-40 / ATCC 43961 / DSM 17024), this protein is DNA replication and repair protein RecF.